We begin with the raw amino-acid sequence, 550 residues long: Envelope glycoprotein E (550 aa).

The first 20 residues, 1–20 (MDRGAVVGFLLGVCVVSCLA), serve as a signal peptide directing secretion. The Virion surface segment spans residues 21 to 419 (GTPKTSWRRV…HAPPTHGALR (399 aa)). Residues 63–88 (CGPLHPSWVSLMPPKQVPETVVDAAC) are interaction with gI. N-linked (GlcNAc...) asparagine; by host glycosylation occurs at N124. The tract at residues 162-214 (QPAPVPTPPPTPADYDEDDNDEGEDESLAGTPASGTPRLPPPPAPPRSWPSAP) is disordered. The segment covering 164–173 (APVPTPPPTP) has biased composition (pro residues). The span at 175–188 (DYDEDDNDEGEDES) shows a compositional bias: acidic residues. Y176 carries the sulfotyrosine; by host modification. Residues 199 to 209 (RLPPPPAPPRS) are compositionally biased toward pro residues. The interval 235-380 (SPGETFSTNV…GHITISTAAQ (146 aa)) is fc-binding. A glycan (N-linked (GlcNAc...) asparagine; by host) is linked at N243. 3 cysteine pairs are disulfide-bonded: C271–C297, C280–C289, and C314–C323. The tract at residues 394-413 (GADLAEPTHPHVGAPPHAPP) is disordered. The segment covering 403–413 (PHVGAPPHAPP) has biased composition (low complexity). Residues 420 to 440 (LGAVMGAALLLSALGLSVWAC) traverse the membrane as a helical segment. Residues 441-550 (MTCWRRRAWR…SQASDSSVFW (110 aa)) are Intravirion-facing. 2 short sequence motifs (internalization motif) span residues 463-466 (YIRV) and 472-475 (YADW). The segment at 470 to 495 (ELYADWSSDSEGERDQVPWLAPPERP) is interaction with VP22 and UL11. S476 and S477 each carry phosphoserine; by host CK2. Residues 476-484 (SSDSEGERD) form an acidic region. The tract at residues 476 to 550 (SSDSEGERDQ…SQASDSSVFW (75 aa)) is disordered. S503 is subject to Phosphoserine. A compositionally biased stretch (polar residues) spans 541–550 (SQASDSSVFW).

It belongs to the alphaherpesvirinae glycoprotein E family. In terms of assembly, interacts with gI; this interaction enhances the Fc receptor function of gE. The heterodimer gE/gI interacts with the Fc part of host IgG. Interacts (via C-terminus) with VP22 tegument protein; this interaction is necessary for the recruitment of VP22 to the Golgi and its packaging into virions. Interacts (via C-terminus) with UL11 tegument protein. Phosphorylated on serines within the acidic cluster. Phosphorylation determines whether endocytosed viral gE traffics to the trans-Golgi network or recycles to the cell membrane. Post-translationally, N-glycosylated, and sulfated.

It localises to the virion membrane. It is found in the host cell membrane. The protein resides in the host cell junction. Its subcellular location is the host Golgi apparatus membrane. The protein localises to the host endosome membrane. In terms of biological role, in epithelial cells, the heterodimer gE/gI is required for the cell-to-cell spread of the virus, by sorting nascent virions to cell junctions. Once the virus reaches the cell junctions, virus particles can spread to adjacent cells extremely rapidly through interactions with cellular receptors that accumulate at these junctions. Implicated in basolateral spread in polarized cells. In neuronal cells, gE/gI is essential for the anterograde spread of the infection throughout the host nervous system. Together with US9, the heterodimer gE/gI is involved in the sorting and transport of viral structural components toward axon tips. The heterodimer gE/gI serves as a receptor for the Fc part of host IgG. Dissociation of gE/gI from IgG occurs at acidic pH. May thus be involved in anti-HSV antibodies bipolar bridging, followed by intracellular endocytosis and degradation, thereby interfering with host IgG-mediated immune responses. The protein is Envelope glycoprotein E (gE) of Human herpesvirus 1 (strain 17) (HHV-1).